The following is a 34-amino-acid chain: Protein HRURF (34 aa).

Functionally, may function as an inhibitory translational control element that can negatively regulate protein translation of HR gene. The chain is Protein HRURF from Homo sapiens (Human).